A 268-amino-acid polypeptide reads, in one-letter code: Zinc transporter ZupT (268 aa).

8 helical membrane passes run 5 to 25 (ILFAFALTLFAGLSTGVGSLI), 36 to 56 (VLTISLGFSAGVMIYVAMIEI), 75 to 95 (VVTVLSFFAGIFLIALIDKLI), 124 to 144 (MGLFSAVAIGIHNFPEGLATF), 157 to 177 (IAVAIAIHNIPEGLAVSAPIF), 187 to 207 (FILSFLSGLAEPVGALIGYFL), 211 to 231 (FFSPSLFGVVFGAVAGIMVYI), and 248 to 268 (FAIGGVIAGMVVMAISLLLFT). Fe(2+)-binding residues include N136 and E139. Residues E139 and H164 each contribute to the Zn(2+) site. Fe(2+) contacts are provided by N165, E168, and E197. Residue E168 coordinates Zn(2+).

It belongs to the ZIP transporter (TC 2.A.5) family. ZupT subfamily.

It localises to the cell membrane. It carries out the reaction Zn(2+)(in) = Zn(2+)(out). In terms of biological role, mediates zinc uptake. May also transport other divalent cations. This Chlorobium chlorochromatii (strain CaD3) protein is Zinc transporter ZupT.